Consider the following 543-residue polypeptide: Keratin, type II cytoskeletal 75 (543 aa).

A compositionally biased stretch (polar residues) spans 1-16; that stretch reads MSRQSTITFQTSSRRG. The disordered stretch occupies residues 1–48; it reads MSRQSTITFQTSSRRGFSTASATTPATSRSRFSSASVTHSPAGSGGLG. A head region spans residues 1 to 144; that stretch reads MSRQSTITFQ…DPNIQRVRKE (144 aa). Over residues 17–36 the composition is skewed to low complexity; sequence FSTASATTPATSRSRFSSAS. The segment at 145-180 is coil 1A; it reads EREQIKTLNNKFASFIDKVRFLEQQNKVLETKWSLL. An IF rod domain is found at 145 to 458; sequence EREQIKTLNN…KLLEGEECRL (314 aa). Residues 181-199 are linker 1; that stretch reads QEQGTRTVRQSLEPFFEAY. Residues 200-292 form a coil 1B region; sequence ITDLRRQLDS…LFEAELCQMQ (93 aa). Residues 293–315 are linker 12; sequence TRVSDTSVVLSMDNNRSLDLDSI. Residues 316–454 are coil 2; sequence IAEVKAQYEE…ATYRKLLEGE (139 aa). The segment at 455–543 is tail; it reads ECRLSGEGVS…TSSSRKSYKH (89 aa). Positions 511–543 are disordered; sequence SSFSNSSSRGLGGSGSSFKFVSTTSSSRKSYKH. Residues 526-543 are compositionally biased toward low complexity; the sequence is SSFKFVSTTSSSRKSYKH.

This sequence belongs to the intermediate filament family. As to quaternary structure, heterodimer of a type I and a type II keratin. May associate with KRT17.

Plays a central role in hair and nail formation. Essential component of keratin intermediate filaments in the companion layer of the hair follicle. This is Keratin, type II cytoskeletal 75 (KRT75) from Bos taurus (Bovine).